Here is a 198-residue protein sequence, read N- to C-terminus: Recombination protein RecR (198 aa).

A C4-type zinc finger spans residues 57 to 72 (CSECGHITEQDPCYIC). The 96-residue stretch at 80–175 (SVICVVEDDK…TVTRLAQGLS (96 aa)) folds into the Toprim domain.

This sequence belongs to the RecR family.

Its function is as follows. May play a role in DNA repair. It seems to be involved in an RecBC-independent recombinational process of DNA repair. It may act with RecF and RecO. The chain is Recombination protein RecR from Staphylococcus saprophyticus subsp. saprophyticus (strain ATCC 15305 / DSM 20229 / NCIMB 8711 / NCTC 7292 / S-41).